The following is a 607-amino-acid chain: DNA mismatch repair protein MutL (607 aa).

Residues 374–411 (RTEAGNEHVPSANRIQPPDPSIDMPDEPVPEQTDEPVA) are disordered. Residues 397–407 (MPDEPVPEQTD) show a composition bias toward acidic residues.

It belongs to the DNA mismatch repair MutL/HexB family.

This protein is involved in the repair of mismatches in DNA. It is required for dam-dependent methyl-directed DNA mismatch repair. May act as a 'molecular matchmaker', a protein that promotes the formation of a stable complex between two or more DNA-binding proteins in an ATP-dependent manner without itself being part of a final effector complex. This is DNA mismatch repair protein MutL from Exiguobacterium sibiricum (strain DSM 17290 / CCUG 55495 / CIP 109462 / JCM 13490 / 255-15).